The sequence spans 351 residues: UDP-N-acetylglucosamine--N-acetylmuramyl-(pentapeptide) pyrophosphoryl-undecaprenol N-acetylglucosamine transferase (351 aa).

Residues 13-15, Asn-125, Arg-161, Ser-189, Ile-241, 260-265, and Gln-285 contribute to the UDP-N-acetyl-alpha-D-glucosamine site; these read TGG and ALTVCE.

It belongs to the glycosyltransferase 28 family. MurG subfamily.

Its subcellular location is the cell inner membrane. It carries out the reaction di-trans,octa-cis-undecaprenyl diphospho-N-acetyl-alpha-D-muramoyl-L-alanyl-D-glutamyl-meso-2,6-diaminopimeloyl-D-alanyl-D-alanine + UDP-N-acetyl-alpha-D-glucosamine = di-trans,octa-cis-undecaprenyl diphospho-[N-acetyl-alpha-D-glucosaminyl-(1-&gt;4)]-N-acetyl-alpha-D-muramoyl-L-alanyl-D-glutamyl-meso-2,6-diaminopimeloyl-D-alanyl-D-alanine + UDP + H(+). It participates in cell wall biogenesis; peptidoglycan biosynthesis. Cell wall formation. Catalyzes the transfer of a GlcNAc subunit on undecaprenyl-pyrophosphoryl-MurNAc-pentapeptide (lipid intermediate I) to form undecaprenyl-pyrophosphoryl-MurNAc-(pentapeptide)GlcNAc (lipid intermediate II). The polypeptide is UDP-N-acetylglucosamine--N-acetylmuramyl-(pentapeptide) pyrophosphoryl-undecaprenol N-acetylglucosamine transferase (Haemophilus influenzae (strain ATCC 51907 / DSM 11121 / KW20 / Rd)).